Reading from the N-terminus, the 509-residue chain is ATP synthase subunit alpha (509 aa).

Residue Gly-169 to Thr-176 coordinates ATP.

Belongs to the ATPase alpha/beta chains family. As to quaternary structure, F-type ATPases have 2 components, CF(1) - the catalytic core - and CF(0) - the membrane proton channel. CF(1) has five subunits: alpha(3), beta(3), gamma(1), delta(1), epsilon(1). CF(0) has three main subunits: a(1), b(2) and c(9-12). The alpha and beta chains form an alternating ring which encloses part of the gamma chain. CF(1) is attached to CF(0) by a central stalk formed by the gamma and epsilon chains, while a peripheral stalk is formed by the delta and b chains.

It localises to the cell inner membrane. It catalyses the reaction ATP + H2O + 4 H(+)(in) = ADP + phosphate + 5 H(+)(out). In terms of biological role, produces ATP from ADP in the presence of a proton gradient across the membrane. The alpha chain is a regulatory subunit. This is ATP synthase subunit alpha from Brucella canis (strain ATCC 23365 / NCTC 10854 / RM-666).